Consider the following 430-residue polypeptide: Trigger factor (430 aa).

Residues 163–248 enclose the PPIase FKBP-type domain; sequence GNIAIIDFKG…VKEIKVKEIP (86 aa).

Belongs to the FKBP-type PPIase family. Tig subfamily.

It is found in the cytoplasm. The enzyme catalyses [protein]-peptidylproline (omega=180) = [protein]-peptidylproline (omega=0). Its function is as follows. Involved in protein export. Acts as a chaperone by maintaining the newly synthesized protein in an open conformation. Functions as a peptidyl-prolyl cis-trans isomerase. This Clostridium kluyveri (strain NBRC 12016) protein is Trigger factor.